A 127-amino-acid polypeptide reads, in one-letter code: Large ribosomal subunit protein bL21 (127 aa).

It belongs to the bacterial ribosomal protein bL21 family. Part of the 50S ribosomal subunit. Contacts protein L20.

Its function is as follows. This protein binds to 23S rRNA in the presence of protein L20. The protein is Large ribosomal subunit protein bL21 of Synechococcus elongatus (strain ATCC 33912 / PCC 7942 / FACHB-805) (Anacystis nidulans R2).